The primary structure comprises 786 residues: Rho GTPase-activating protein 10 (786 aa).

In terms of domain architecture, BAR spans 7 to 262; the sequence is EFSDCYLDSP…IRQNPKDQKR (256 aa). The PH domain occupies 265 to 372; sequence QFTAEGYLYV…WLEALGGKEA (108 aa). One can recognise a Rho-GAP domain in the interval 389–574; that stretch reads AQLDKMGFTI…ILIENHEKIF (186 aa). Disordered regions lie at residues 584–609 and 622–714; these read EPTC…RTKR and EGDS…PFPL. Positions 599 to 609 are enriched in basic residues; it reads QSKRQGQRTKR. Over residues 634 to 649 the composition is skewed to low complexity; the sequence is PSSSQDSLSTPSPTTS. A compositionally biased stretch (polar residues) spans 673–701; the sequence is TATTPSQTRPSMVQWLNMQSPTTPSSNPA. Positions 702-714 are enriched in pro residues; the sequence is GTPPSPRMSPFPL. Residues 728 to 786 enclose the SH3 domain; the sequence is VINRKARAVYPCEAEHSSELSFEIGAIFEDVQTSREPGWLEGTLNGKRGLIPQNYVKLL.

In terms of assembly, interacts with PKN3. Interacts with caspase-activated PAK2 proteolytic fragment PAK-2p34; the interaction does not affect ARHGAP10 GTPase activation activity towards RHOA and CDC42. Interacts via its SH3 domain with PTK2/FAK1. Interacts with PTK2B/PYK2; the interaction negatively regulates ARHGAP10 GTPase-activating activity. Interacts with MICAL1 and WDR44; complex formation might transit from GRAF2/ARHGAP10-MICAL1 to GRAF2/ARHGAP10-WDR44 complexes. Post-translationally, phosphorylated on tyrosine residues, probably involving PTK2B/PYK2. High levels of expression in brain, testes, liver, heart and kidney.

The protein localises to the cytoplasm. Its subcellular location is the perinuclear region. The protein resides in the cell membrane. It localises to the endosome membrane. GTPase-activating protein that catalyzes the conversion of active GTP-bound Rho GTPases to their inactive GDP-bound form, thus suppressing various Rho GTPase-mediated cellular processes. Also converts Cdc42 to an inactive GDP-bound state. Essential for PTKB2 regulation of cytoskeletal organization via Rho family GTPases. Inhibits PAK2 proteolytic fragment PAK-2p34 kinase activity and changes its localization from the nucleus to the perinuclear region. Stabilizes PAK-2p34 thereby increasing stimulation of cell death. Associates with MICAL1 on the endosomal membrane to promote Rab8-Rab10-dependent tubule extension. After dissociation with MICAL1, recruits WDR44 which connects the endoplasmic reticulum (ER) with the endosomal tubule, thereby participating in the export of a subset of neosynthesized proteins. The sequence is that of Rho GTPase-activating protein 10 (Arhgap10) from Mus musculus (Mouse).